The sequence spans 525 residues: Cytochrome P450 monooxygenase ltmJ (525 aa).

The chain crosses the membrane as a helical span at residues 21-43; that stretch reads LTWWQTIVSFIIFCIMCSWLPGN. Asparagine 136 carries N-linked (GlcNAc...) asparagine glycosylation. Cysteine 465 lines the heme pocket.

Belongs to the cytochrome P450 family. Requires heme as cofactor.

It localises to the membrane. It functions in the pathway secondary metabolite biosynthesis. Functionally, cytochrome P450 monooxygenase; part of the gene clusters that mediates the biosynthesis of lolitrems, indole-diterpene mycotoxins that are potent tremorgens in mammals, and are synthesized by clavicipitaceous fungal endophytes in association with their grass hosts. The geranylgeranyl diphosphate (GGPP) synthase ltmG is proposed to catalyze the first step in lolitrem biosynthesis. LtmG catalyzes a series of iterative condensations of isopentenyl diphosphate (IPP) with dimethylallyl diphosphate (DMAPP), geranyl diphosphate (GPP), and farnesyl diphosphate (FPP), to form GGPP. GGPP then condenses with indole-3-glycerol phosphate to form 3-geranylgeranylindole, an acyclic intermediate, to be incorporated into paxilline. Either ltmG or ltmC could be responsible for this step, as both are putative prenyl transferases. The FAD-dependent monooxygenase ltmM then catalyzes the epoxidation of the two terminal alkenes of the geranylgeranyl moiety, which is subsequently cyclized by ltmB, to paspaline. The cytochrome P450 monooxygenases ltmQ and ltmP can sequentially oxidize paspaline to terpendole E and terpendole F. Alternatively, ltmP converts paspaline to an intermediate which is oxidized by ltmQ to terpendole F. LtmF, ltmK, ltmE and ltmJ appear to be unique to the epichloe endophytes. The prenyltransferase ltmF is involved in the 27-hydroxyl-O-prenylation. The cytochrome P450 monooxygenase ltmK is required for the oxidative acetal ring formation. The multi-functional prenyltransferase ltmE is required for C20- and C21-prenylations of the indole ring of paspalanes and acts together with the cytochrome P450 monooxygenase ltmJ to yield lolitremanes by multiple oxidations and ring closures. The stereoisomer pairs of lolitriol and lolitrem N or lolitrem B and lolitrem F may be attributed to variations in the way in which ring closure can occur under the action of ltmJ. While the major product of this pathway is lolitrem B, the prenyl transferases and cytochrome P450 monooxygenases identified in this pathway have a remarkable versatility in their regio- and stereo-specificities to generate a diverse range of metabolites that are products of a metabolic grid rather than a linear pathway. The polypeptide is Cytochrome P450 monooxygenase ltmJ (ltmJ) (Epichloe festucae var. lolii (Neotyphodium lolii)).